The sequence spans 294 residues: Cytidine deaminase (294 aa).

CMP/dCMP-type deaminase domains are found at residues 48 to 168 and 186 to 294; these read DEDA…FGPK and LTGD…VLLG. Position 89–91 (89–91) interacts with substrate; that stretch reads NME. Zn(2+) is bound at residue His-102. Glu-104 functions as the Proton donor in the catalytic mechanism. Zn(2+) contacts are provided by Cys-129 and Cys-132.

The protein belongs to the cytidine and deoxycytidylate deaminase family. In terms of assembly, homodimer. Zn(2+) is required as a cofactor.

The catalysed reaction is cytidine + H2O + H(+) = uridine + NH4(+). It carries out the reaction 2'-deoxycytidine + H2O + H(+) = 2'-deoxyuridine + NH4(+). In terms of biological role, this enzyme scavenges exogenous and endogenous cytidine and 2'-deoxycytidine for UMP synthesis. In Salmonella arizonae (strain ATCC BAA-731 / CDC346-86 / RSK2980), this protein is Cytidine deaminase.